The following is a 492-amino-acid chain: N-succinylglutamate 5-semialdehyde dehydrogenase (492 aa).

220–225 (GSANTG) lines the NAD(+) pocket. Active-site residues include glutamate 243 and cysteine 277.

It belongs to the aldehyde dehydrogenase family. AstD subfamily.

The enzyme catalyses N-succinyl-L-glutamate 5-semialdehyde + NAD(+) + H2O = N-succinyl-L-glutamate + NADH + 2 H(+). It participates in amino-acid degradation; L-arginine degradation via AST pathway; L-glutamate and succinate from L-arginine: step 4/5. Functionally, catalyzes the NAD-dependent reduction of succinylglutamate semialdehyde into succinylglutamate. This chain is N-succinylglutamate 5-semialdehyde dehydrogenase, found in Escherichia coli O6:K15:H31 (strain 536 / UPEC).